We begin with the raw amino-acid sequence, 243 residues long: UPF0246 protein SEQ_2141 (243 aa).

Belongs to the UPF0246 family.

This chain is UPF0246 protein SEQ_2141, found in Streptococcus equi subsp. equi (strain 4047).